We begin with the raw amino-acid sequence, 577 residues long: Arginine--tRNA ligase (577 aa).

A 'HIGH' region motif is present at residues 122–132; it reads PNVAKEMHVGH.

It belongs to the class-I aminoacyl-tRNA synthetase family. As to quaternary structure, monomer.

The protein localises to the cytoplasm. It catalyses the reaction tRNA(Arg) + L-arginine + ATP = L-arginyl-tRNA(Arg) + AMP + diphosphate. The chain is Arginine--tRNA ligase from Salmonella enteritidis PT4 (strain P125109).